The chain runs to 405 residues: Terminal uridylyltransferase cid1 (405 aa).

Ser-90 provides a ligand contact to UTP. Residues Asp-101 and Asp-103 each coordinate Mg(2+). UTP is bound by residues Ala-168, Asn-171, Thr-172, Lys-193, Lys-197, Ser-211, Tyr-212, and His-336. Residues 267-336 enclose the PAP-associated domain; the sequence is SLGSLLHGFF…AIEDPFEISH (70 aa). Arg-340 provides a ligand contact to ATP. A disordered region spans residues 377–405; the sequence is APIPPRRQKKTDEQSNKKLLNETDGDNSE. A compositionally biased stretch (basic and acidic residues) spans 386–397; the sequence is KTDEQSNKKLLN.

It belongs to the DNA polymerase type-B-like family. It depends on Mg(2+) as a cofactor. Mn(2+) is required as a cofactor.

Its subcellular location is the cytoplasm. It catalyses the reaction RNA(n) + UTP = RNA(n)-3'-uridine ribonucleotide + diphosphate. The catalysed reaction is RNA(n) + ATP = RNA(n)-3'-adenine ribonucleotide + diphosphate. Cytoplasmic uridylyltransferase that mediates the terminal uridylation of mRNAs with short poly(A) tails such as such as act1, hcn1 and urg1 mRNAs, hence facilitating global mRNA decay. Uridylates the 3' ends of actin mRNAs upon S-phase arrest. Also has a weak poly(A) polymerase (PAP) activity. Residue His-336 is responsible for the specificity for UTP. Involved in cell cycle arrest where in association with crb2/rhp9 and chk1 it inhibits unscheduled mitosis. This chain is Terminal uridylyltransferase cid1, found in Schizosaccharomyces pombe (strain 972 / ATCC 24843) (Fission yeast).